We begin with the raw amino-acid sequence, 552 residues long: (R)-mandelonitrile lyase-like (552 aa).

A signal peptide spans 1–28 (MTKRIDSSLLYTALVVLLLLGVVHRSNA). N-linked (GlcNAc...) asparagine glycosylation occurs at Asn-44. Residue 55–82 (DYIIVGGGTAGCPLAATLSQSFRVLLLE) coordinates FAD. Asn-162, Asn-259, and Asn-434 each carry an N-linked (GlcNAc...) asparagine glycan. His-492 acts as the Proton acceptor in catalysis.

Belongs to the GMC oxidoreductase family. Monomer. It depends on FAD as a cofactor. Post-translationally, glycosylated.

The catalysed reaction is (R)-mandelonitrile = benzaldehyde + hydrogen cyanide. The chain is (R)-mandelonitrile lyase-like from Arabidopsis thaliana (Mouse-ear cress).